A 463-amino-acid chain; its full sequence is Glutamate--tRNA ligase 1 (463 aa).

The 'HIGH' region signature appears at 10 to 20 (PSPTGYLHIGG). Positions 238-242 (KLSKR) match the 'KMSKS' region motif. Lys-241 serves as a coordination point for ATP.

It belongs to the class-I aminoacyl-tRNA synthetase family. Glutamate--tRNA ligase type 1 subfamily. As to quaternary structure, monomer.

It is found in the cytoplasm. It carries out the reaction tRNA(Glu) + L-glutamate + ATP = L-glutamyl-tRNA(Glu) + AMP + diphosphate. Its function is as follows. Catalyzes the attachment of glutamate to tRNA(Glu) in a two-step reaction: glutamate is first activated by ATP to form Glu-AMP and then transferred to the acceptor end of tRNA(Glu). The sequence is that of Glutamate--tRNA ligase 1 from Helicobacter pylori (strain J99 / ATCC 700824) (Campylobacter pylori J99).